A 416-amino-acid polypeptide reads, in one-letter code: Tyrosine--tRNA ligase (416 aa).

Y40 contacts L-tyrosine. A 'HIGH' region motif is present at residues 45–54; sequence ATAASLHVGH. L-tyrosine is bound by residues Y177 and Q181. A 'KMSKS' region motif is present at residues 237 to 241; the sequence is KMGKS. K240 is a binding site for ATP. Residues 351–416 form the S4 RNA-binding domain; the sequence is LSVTHFLVAA…RKKHKLVRLA (66 aa).

Belongs to the class-I aminoacyl-tRNA synthetase family. TyrS type 1 subfamily. In terms of assembly, homodimer.

It localises to the cytoplasm. The catalysed reaction is tRNA(Tyr) + L-tyrosine + ATP = L-tyrosyl-tRNA(Tyr) + AMP + diphosphate + H(+). Catalyzes the attachment of tyrosine to tRNA(Tyr) in a two-step reaction: tyrosine is first activated by ATP to form Tyr-AMP and then transferred to the acceptor end of tRNA(Tyr). The polypeptide is Tyrosine--tRNA ligase (Cereibacter sphaeroides (strain ATCC 17025 / ATH 2.4.3) (Rhodobacter sphaeroides)).